Here is a 327-residue protein sequence, read N- to C-terminus: Undecaprenyl-phosphate 4-deoxy-4-formamido-L-arabinose transferase (327 aa).

Helical transmembrane passes span 236-256 (LSVFGSIIAVLGFTLSVLLVV) and 270-290 (VFMLFAVLFMFIGAQFVAMGL).

It belongs to the glycosyltransferase 2 family.

It is found in the cell inner membrane. It carries out the reaction UDP-4-deoxy-4-formamido-beta-L-arabinose + di-trans,octa-cis-undecaprenyl phosphate = 4-deoxy-4-formamido-alpha-L-arabinopyranosyl di-trans,octa-cis-undecaprenyl phosphate + UDP. It participates in glycolipid biosynthesis; 4-amino-4-deoxy-alpha-L-arabinose undecaprenyl phosphate biosynthesis; 4-amino-4-deoxy-alpha-L-arabinose undecaprenyl phosphate from UDP-4-deoxy-4-formamido-beta-L-arabinose and undecaprenyl phosphate: step 1/2. The protein operates within bacterial outer membrane biogenesis; lipopolysaccharide biosynthesis. Catalyzes the transfer of 4-deoxy-4-formamido-L-arabinose from UDP to undecaprenyl phosphate. The modified arabinose is attached to lipid A and is required for resistance to polymyxin and cationic antimicrobial peptides. The chain is Undecaprenyl-phosphate 4-deoxy-4-formamido-L-arabinose transferase from Enterobacter sp. (strain 638).